Here is a 26-residue protein sequence, read N- to C-terminus: AMP deaminase 1 (26 aa).

The protein belongs to the metallo-dependent hydrolases superfamily. Adenosine and AMP deaminases family. In terms of assembly, homotetramer.

It carries out the reaction AMP + H2O + H(+) = IMP + NH4(+). The protein operates within purine metabolism; IMP biosynthesis via salvage pathway; IMP from AMP: step 1/1. AMP deaminase plays a critical role in energy metabolism. This chain is AMP deaminase 1 (AMPD1), found in Gallus gallus (Chicken).